A 161-amino-acid polypeptide reads, in one-letter code: Putative 4-hydroxy-4-methyl-2-oxoglutarate aldolase (161 aa).

Substrate contacts are provided by residues 75–78 (GDML) and arginine 97. Aspartate 98 is a binding site for a divalent metal cation.

The protein belongs to the class II aldolase/RraA-like family. As to quaternary structure, homotrimer. A divalent metal cation serves as cofactor.

The catalysed reaction is 4-hydroxy-4-methyl-2-oxoglutarate = 2 pyruvate. It carries out the reaction oxaloacetate + H(+) = pyruvate + CO2. Catalyzes the aldol cleavage of 4-hydroxy-4-methyl-2-oxoglutarate (HMG) into 2 molecules of pyruvate. Also contains a secondary oxaloacetate (OAA) decarboxylase activity due to the common pyruvate enolate transition state formed following C-C bond cleavage in the retro-aldol and decarboxylation reactions. This chain is Putative 4-hydroxy-4-methyl-2-oxoglutarate aldolase, found in Marinomonas sp. (strain MWYL1).